Here is a 443-residue protein sequence, read N- to C-terminus: ATP-dependent protease ATPase subunit HslU (443 aa).

Residues Ile18, 60–65, Asp256, Glu321, and Arg393 contribute to the ATP site; that span reads GVGKTE.

Belongs to the ClpX chaperone family. HslU subfamily. A double ring-shaped homohexamer of HslV is capped on each side by a ring-shaped HslU homohexamer. The assembly of the HslU/HslV complex is dependent on binding of ATP.

Its subcellular location is the cytoplasm. In terms of biological role, ATPase subunit of a proteasome-like degradation complex; this subunit has chaperone activity. The binding of ATP and its subsequent hydrolysis by HslU are essential for unfolding of protein substrates subsequently hydrolyzed by HslV. HslU recognizes the N-terminal part of its protein substrates and unfolds these before they are guided to HslV for hydrolysis. The polypeptide is ATP-dependent protease ATPase subunit HslU (Yersinia pestis bv. Antiqua (strain Antiqua)).